Here is a 468-residue protein sequence, read N- to C-terminus: Na(+)/H(+) antiporter (468 aa).

8 helical membrane-spanning segments follow: residues 12-32 (HLAL…SEVF), 36-56 (LLVG…PHAA), 81-96 (DVRV…GAYF), 103-123 (IIVM…GFAY), 133-153 (GSLL…ALIV), 169-189 (LLIA…YFAI), 204-224 (WVLL…CVIG), and 258-278 (GIGT…GILF). Asn-287 carries an N-linked (GlcNAc...) asparagine glycan. A helical membrane pass occupies residues 293-313 (VPAFIDQTFSLLFFTYYGTII). Residue Asn-319 is glycosylated (N-linked (GlcNAc...) asparagine). Transmembrane regions (helical) follow at residues 320–340 (WSVE…TLVC), 362–382 (ALFV…AFLA), and 408–428 (IIWP…GFSI). 2 positions are modified to phosphoserine: Ser-449 and Ser-451.

This sequence belongs to the fungal Na(+)/H(+) exchanger family.

It is found in the cell membrane. In terms of biological role, sodium export from cell, takes up external protons in exchange for internal sodium ions. Involved in regulation of pH. This Schizosaccharomyces pombe (strain 972 / ATCC 24843) (Fission yeast) protein is Na(+)/H(+) antiporter.